Reading from the N-terminus, the 105-residue chain is Cyclotide vibi-J (105 aa).

The N-terminal stretch at 1-9 (AAFALPALA) is a signal peptide. Positions 10–71 (TSFEKDFITH…KSSNSINALG (62 aa)) are excised as a propeptide. The cyclopeptide (Gly-Asn) cross-link spans 72-102 (GTFPCGESCVWIPCISKVIGCACKSKVCYKN). Intrachain disulfides connect Cys76-Cys92, Cys80-Cys94, and Cys85-Cys99. Residues 103-105 (SLA) constitute a propeptide that is removed on maturation.

This is a cyclic peptide.

In terms of biological role, probably participates in a plant defense mechanism. This chain is Cyclotide vibi-J, found in Viola biflora (Yellow wood violet).